The following is a 1384-amino-acid chain: RRP12-like protein (1384 aa).

The segment covering 1 to 13 has biased composition (basic residues); the sequence is MGKFRSKLKRNGK. Positions 1–32 are disordered; sequence MGKFRSKLKRNGKGKTWSRGESATSNPTQMKH. A compositionally biased stretch (polar residues) spans 19–29; sequence RGESATSNPTQ. Phosphoserine occurs at positions 82, 85, 96, 1094, 1095, 1117, and 1119. 3 disordered regions span residues 1082–1102, 1114–1155, and 1176–1384; these read LRKK…LVSG, LADS…IRED, and SAQT…KKYK. Acidic residues-rich tracts occupy residues 1090 to 1099 and 1114 to 1127; these read AQEDSSDDEL and LADS…DMDA. Residues 1176-1191 show a composition bias toward polar residues; it reads SAQTATPAQSQKTKAQ. Residues Ser-1221, Ser-1225, Ser-1227, Ser-1230, Ser-1250, and Ser-1251 each carry the phosphoserine modification. 2 stretches are compositionally biased toward polar residues: residues 1276 to 1285 and 1297 to 1315; these read SGKTTASSRY and TAGN…TSRP. Over residues 1321 to 1334 the composition is skewed to basic and acidic residues; the sequence is GSKKAKGDMKKSGK. The segment covering 1348-1362 has biased composition (basic residues); that stretch reads LNKRKRSMNSRKFKS. Residues 1369-1378 show a composition bias toward gly residues; sequence AENGGAGGGR.

This sequence belongs to the RRP12 family.

The protein resides in the nucleus. In Drosophila melanogaster (Fruit fly), this protein is RRP12-like protein.